The primary structure comprises 266 residues: HLA class II histocompatibility antigen, DR beta 4 chain (266 aa).

The N-terminal stretch at 1 to 29 (MVCLKLPGGSCMAALTVTLTVLSSPLALA) is a signal peptide. The beta-1 stretch occupies residues 30–124 (GDTQPRFLEQ…VESFTVQRRV (95 aa)). Residues 30-227 (GDTQPRFLEQ…SARSESAQSK (198 aa)) are Extracellular-facing. 2 cysteine pairs are disulfide-bonded: Cys-44–Cys-108 and Cys-146–Cys-202. A glycan (N-linked (GlcNAc...) asparagine) is linked at Asn-48. Positions 125–227 (QPKVTVYPSK…SARSESAQSK (103 aa)) are beta-2. In terms of domain architecture, Ig-like C1-type spans 126–216 (PKVTVYPSKT…PSMMSPLTVQ (91 aa)). The helical transmembrane segment at 228 to 250 (MLSGVGGFVLGLLFLGTGLFIYF) threads the bilayer. At 251 to 266 (RNQKGHSGLQPTGLLS) the chain is on the cytoplasmic side. Lys-254 participates in a covalent cross-link: Glycyl lysine isopeptide (Lys-Gly) (interchain with G-Cter in ubiquitin).

It belongs to the MHC class II family. Heterodimer of an alpha and a beta subunit; also referred as MHC class II molecule. In the endoplasmic reticulum (ER) it forms a heterononamer; 3 MHC class II molecules bind to a CD74 homotrimer (also known as invariant chain or HLA class II histocompatibility antigen gamma chain). In the endosomal/lysosomal system; CD74 undergoes sequential degradation by various proteases; leaving a small fragment termed CLIP on each MHC class II molecule. MHC class II molecule interacts with HLA_DM, and HLA_DO in B-cells, in order to release CLIP and facilitate the binding of antigenic peptides. Ubiquitinated by MARCH1 and MARCH8 at Lys-254 leading to sorting into the endosome system and down-regulation of MHC class II. When associated with ubiquitination of the alpha subunit of HLA-DR: HLA-DRA 'Lys-244', the down-regulation of MHC class II may be highly effective.

It is found in the cell membrane. It localises to the endoplasmic reticulum membrane. The protein resides in the golgi apparatus. Its subcellular location is the trans-Golgi network membrane. The protein localises to the endosome membrane. It is found in the lysosome membrane. It localises to the late endosome membrane. In terms of biological role, binds peptides derived from antigens that access the endocytic route of antigen presenting cells (APC) and presents them on the cell surface for recognition by the CD4 T-cells. The peptide binding cleft accommodates peptides of 10-30 residues. The peptides presented by MHC class II molecules are generated mostly by degradation of proteins that access the endocytic route, where they are processed by lysosomal proteases and other hydrolases. Exogenous antigens that have been endocytosed by the APC are thus readily available for presentation via MHC II molecules, and for this reason this antigen presentation pathway is usually referred to as exogenous. As membrane proteins on their way to degradation in lysosomes as part of their normal turn-over are also contained in the endosomal/lysosomal compartments, exogenous antigens must compete with those derived from endogenous components. Autophagy is also a source of endogenous peptides, autophagosomes constitutively fuse with MHC class II loading compartments. In addition to APCs, other cells of the gastrointestinal tract, such as epithelial cells, express MHC class II molecules and CD74 and act as APCs, which is an unusual trait of the GI tract. To produce a MHC class II molecule that presents an antigen, three MHC class II molecules (heterodimers of an alpha and a beta chain) associate with a CD74 trimer in the ER to form a heterononamer. Soon after the entry of this complex into the endosomal/lysosomal system where antigen processing occurs, CD74 undergoes a sequential degradation by various proteases, including CTSS and CTSL, leaving a small fragment termed CLIP (class-II-associated invariant chain peptide). The removal of CLIP is facilitated by HLA-DM via direct binding to the alpha-beta-CLIP complex so that CLIP is released. HLA-DM stabilizes MHC class II molecules until primary high affinity antigenic peptides are bound. The MHC II molecule bound to a peptide is then transported to the cell membrane surface. In B-cells, the interaction between HLA-DM and MHC class II molecules is regulated by HLA-DO. Primary dendritic cells (DCs) also to express HLA-DO. Lysosomal microenvironment has been implicated in the regulation of antigen loading into MHC II molecules, increased acidification produces increased proteolysis and efficient peptide loading. The sequence is that of HLA class II histocompatibility antigen, DR beta 4 chain (HLA-DRB4) from Homo sapiens (Human).